A 744-amino-acid polypeptide reads, in one-letter code: NAD(P)H-quinone oxidoreductase subunit 5, chloroplastic (744 aa).

The next 16 helical transmembrane spans lie at 9–29 (WIIP…LFLF), 40–60 (WAFQ…NLSI), 89–109 (IDPL…LVLI), 125–145 (FVYM…SNLI), 147–167 (IYIF…FWFT), 185–205 (GDFG…SFEF), 219–239 (NEVN…GAIA), 258–278 (TPIS…FLVA), 290–312 (IMNF…ALAQ), 327–347 (LGYM…FHLI), 354–374 (ALLF…VGYC), 396–416 (TSFL…CFWS), 425–445 (WLYS…TAFY), 549–569 (LFPI…GIPF), 608–628 (VFSV…YKPV), and 724–744 (YLFF…FLNF).

This sequence belongs to the complex I subunit 5 family. As to quaternary structure, NDH is composed of at least 16 different subunits, 5 of which are encoded in the nucleus.

Its subcellular location is the plastid. The protein resides in the chloroplast thylakoid membrane. It catalyses the reaction a plastoquinone + NADH + (n+1) H(+)(in) = a plastoquinol + NAD(+) + n H(+)(out). The catalysed reaction is a plastoquinone + NADPH + (n+1) H(+)(in) = a plastoquinol + NADP(+) + n H(+)(out). NDH shuttles electrons from NAD(P)H:plastoquinone, via FMN and iron-sulfur (Fe-S) centers, to quinones in the photosynthetic chain and possibly in a chloroplast respiratory chain. The immediate electron acceptor for the enzyme in this species is believed to be plastoquinone. Couples the redox reaction to proton translocation, and thus conserves the redox energy in a proton gradient. The polypeptide is NAD(P)H-quinone oxidoreductase subunit 5, chloroplastic (ndhF) (Mutisia acuminata).